We begin with the raw amino-acid sequence, 1034 residues long: Translation initiation factor IF-2 (1034 aa).

Disordered stretches follow at residues 118-140 (AAEA…QSVE) and 154-446 (EAEA…NESA). Composition is skewed to low complexity over residues 162 to 178 (TPPV…AAAP) and 212 to 228 (PAVK…PAAS). Residues 304–315 (DRAREDARRAAE) are compositionally biased toward basic and acidic residues. Residues 535-702 (PRAPVVTVMG…NVLLQAEILE (168 aa)) enclose the tr-type G domain. The interval 544–551 (GHVDHGKT) is G1. GTP is bound at residue 544–551 (GHVDHGKT). Positions 569–573 (GITQH) are G2. A G3 region spans residues 590-593 (DTPG). Residues 590 to 594 (DTPGH) and 644 to 647 (NKID) contribute to the GTP site. A G4 region spans residues 644–647 (NKID). A G5 region spans residues 680 to 682 (SAK).

It belongs to the TRAFAC class translation factor GTPase superfamily. Classic translation factor GTPase family. IF-2 subfamily.

It is found in the cytoplasm. Its function is as follows. One of the essential components for the initiation of protein synthesis. Protects formylmethionyl-tRNA from spontaneous hydrolysis and promotes its binding to the 30S ribosomal subunits. Also involved in the hydrolysis of GTP during the formation of the 70S ribosomal complex. The sequence is that of Translation initiation factor IF-2 from Bordetella avium (strain 197N).